The following is a 187-amino-acid chain: Probable chorismate pyruvate-lyase (187 aa).

The substrate site is built by arginine 80, leucine 118, and glutamate 170.

It belongs to the UbiC family.

Its subcellular location is the cytoplasm. The enzyme catalyses chorismate = 4-hydroxybenzoate + pyruvate. It participates in cofactor biosynthesis; ubiquinone biosynthesis. In terms of biological role, removes the pyruvyl group from chorismate, with concomitant aromatization of the ring, to provide 4-hydroxybenzoate (4HB) for the ubiquinone pathway. This is Probable chorismate pyruvate-lyase from Pseudomonas fluorescens (strain ATCC BAA-477 / NRRL B-23932 / Pf-5).